We begin with the raw amino-acid sequence, 98 residues long: Integration host factor subunit alpha (98 aa).

The segment at 51–71 (NFDLRDKNERPGRNPKTGEDI) is disordered. The segment covering 53-69 (DLRDKNERPGRNPKTGE) has biased composition (basic and acidic residues).

It belongs to the bacterial histone-like protein family. Heterodimer of an alpha and a beta chain.

In terms of biological role, this protein is one of the two subunits of integration host factor, a specific DNA-binding protein that functions in genetic recombination as well as in transcriptional and translational control. In Vibrio campbellii (strain ATCC BAA-1116), this protein is Integration host factor subunit alpha.